The sequence spans 200 residues: ATP-dependent Clp protease proteolytic subunit (200 aa).

Serine 101 acts as the Nucleophile in catalysis. Histidine 126 is an active-site residue.

Belongs to the peptidase S14 family. As to quaternary structure, component of the chloroplastic Clp protease core complex.

It is found in the plastid. The protein resides in the chloroplast stroma. It carries out the reaction Hydrolysis of proteins to small peptides in the presence of ATP and magnesium. alpha-casein is the usual test substrate. In the absence of ATP, only oligopeptides shorter than five residues are hydrolyzed (such as succinyl-Leu-Tyr-|-NHMec, and Leu-Tyr-Leu-|-Tyr-Trp, in which cleavage of the -Tyr-|-Leu- and -Tyr-|-Trp bonds also occurs).. In terms of biological role, cleaves peptides in various proteins in a process that requires ATP hydrolysis. Has a chymotrypsin-like activity. Plays a major role in the degradation of misfolded proteins. The sequence is that of ATP-dependent Clp protease proteolytic subunit from Ostreococcus tauri.